The primary structure comprises 475 residues: Dihydrolipoyl dehydrogenase (475 aa).

FAD contacts are provided by residues 39-47 (EKDAYGGTC), lysine 56, and alanine 118. The cysteines at positions 47 and 52 are disulfide-linked. NAD(+) contacts are provided by residues 186-190 (GGGYI), glutamate 209, and 275-278 (AVGR). FAD-binding residues include aspartate 318 and alanine 327. The Proton acceptor role is filled by histidine 451.

The protein belongs to the class-I pyridine nucleotide-disulfide oxidoreductase family. Homodimer. FAD is required as a cofactor.

It is found in the cytoplasm. The enzyme catalyses N(6)-[(R)-dihydrolipoyl]-L-lysyl-[protein] + NAD(+) = N(6)-[(R)-lipoyl]-L-lysyl-[protein] + NADH + H(+). The protein is Dihydrolipoyl dehydrogenase (lpdA) of Haloferax volcanii (strain ATCC 29605 / DSM 3757 / JCM 8879 / NBRC 14742 / NCIMB 2012 / VKM B-1768 / DS2) (Halobacterium volcanii).